We begin with the raw amino-acid sequence, 393 residues long: Stearoyl-[acyl-carrier-protein] 9-desaturase, chloroplastic (393 aa).

Residues 1-30 (MALNINGVSLKSHKMLPFPCSSARSERVFM) constitute a chloroplast transit peptide. Residues Glu-135, Glu-173, His-176, Glu-259, and His-262 each contribute to the Fe cation site.

The protein belongs to the fatty acid desaturase type 2 family. Homodimer. Fe(2+) is required as a cofactor.

Its subcellular location is the plastid. The protein localises to the chloroplast. The catalysed reaction is octadecanoyl-[ACP] + 2 reduced [2Fe-2S]-[ferredoxin] + O2 + 2 H(+) = (9Z)-octadecenoyl-[ACP] + 2 oxidized [2Fe-2S]-[ferredoxin] + 2 H2O. The protein operates within lipid metabolism; fatty acid metabolism. Converts stearoyl-ACP to oleoyl-ACP by introduction of a cis double bond between carbons 9 and 10 of the acyl chain. This chain is Stearoyl-[acyl-carrier-protein] 9-desaturase, chloroplastic, found in Solanum tuberosum (Potato).